A 146-amino-acid polypeptide reads, in one-letter code: Cyanate hydratase (146 aa).

Active-site residues include arginine 87, glutamate 90, and serine 113.

The protein belongs to the cyanase family.

The enzyme catalyses cyanate + hydrogencarbonate + 3 H(+) = NH4(+) + 2 CO2. In terms of biological role, catalyzes the reaction of cyanate with bicarbonate to produce ammonia and carbon dioxide. This Marinomonas sp. (strain MWYL1) protein is Cyanate hydratase.